Here is a 439-residue protein sequence, read N- to C-terminus: Large ribosomal subunit protein mL44 (439 aa).

2 disordered regions span residues 39–73 (QSTAALAQHDASHDLNNDRFPPLEPLPPAAESLPS) and 247–282 (KAMEEQDQDKTPDEEEAEMVANEQDQDVSYDRYGNP). The span at 247 to 257 (KAMEEQDQDKT) shows a compositional bias: basic and acidic residues. Positions 258 to 274 (PDEEEAEMVANEQDQDV) are enriched in acidic residues.

This sequence belongs to the ribonuclease III family. Mitochondrion-specific ribosomal protein mL44 subfamily. In terms of assembly, component of the mitochondrial large ribosomal subunit (mt-LSU). Mature N.crassa 74S mitochondrial ribosomes consist of a small (37S) and a large (54S) subunit. The 37S small subunit contains a 16S ribosomal RNA (16S mt-rRNA) and 32 different proteins. The 54S large subunit contains a 23S rRNA (23S mt-rRNA) and 42 different proteins. mL44 forms a heterodimer with mL57 and stabilizes rRNA expansion segments 1/2 at a membrane-facing protuberance close to the point of attachment of the ribosome to the translocon in the membrane.

The protein resides in the mitochondrion. In terms of biological role, component of the mitochondrial ribosome (mitoribosome), a dedicated translation machinery responsible for the synthesis of mitochondrial genome-encoded proteins, including at least some of the essential transmembrane subunits of the mitochondrial respiratory chain. The mitoribosomes are attached to the mitochondrial inner membrane and translation products are cotranslationally integrated into the membrane. This Neurospora crassa (strain ATCC 24698 / 74-OR23-1A / CBS 708.71 / DSM 1257 / FGSC 987) protein is Large ribosomal subunit protein mL44 (mrpl3).